The sequence spans 102 residues: Small ribosomal subunit protein uS10 (102 aa).

Belongs to the universal ribosomal protein uS10 family. Part of the 30S ribosomal subunit.

Its function is as follows. Involved in the binding of tRNA to the ribosomes. In Xanthobacter autotrophicus (strain ATCC BAA-1158 / Py2), this protein is Small ribosomal subunit protein uS10.